A 362-amino-acid chain; its full sequence is 4-hydroxy-3-methylbut-2-en-1-yl diphosphate synthase (flavodoxin) (362 aa).

The [4Fe-4S] cluster site is built by C266, C269, C301, and E308.

This sequence belongs to the IspG family. [4Fe-4S] cluster is required as a cofactor.

It carries out the reaction (2E)-4-hydroxy-3-methylbut-2-enyl diphosphate + oxidized [flavodoxin] + H2O + 2 H(+) = 2-C-methyl-D-erythritol 2,4-cyclic diphosphate + reduced [flavodoxin]. It participates in isoprenoid biosynthesis; isopentenyl diphosphate biosynthesis via DXP pathway; isopentenyl diphosphate from 1-deoxy-D-xylulose 5-phosphate: step 5/6. Functionally, converts 2C-methyl-D-erythritol 2,4-cyclodiphosphate (ME-2,4cPP) into 1-hydroxy-2-methyl-2-(E)-butenyl 4-diphosphate. The protein is 4-hydroxy-3-methylbut-2-en-1-yl diphosphate synthase (flavodoxin) of Malacoplasma penetrans (strain HF-2) (Mycoplasma penetrans).